Reading from the N-terminus, the 241-residue chain is Large ribosomal subunit protein uL3 (241 aa).

2 disordered regions span residues 139–166 (VSHR…PGHM) and 214–241 (ADAP…QEGA). Gln-151 is subject to N5-methylglutamine. The segment covering 229–241 (AAAEAPAAEQEGA) has biased composition (low complexity).

As to quaternary structure, part of the 50S ribosomal subunit. Forms a cluster with proteins L14 and L19. Methylated, on either Lys-155 or Lys-158. Post-translationally, methylated by PrmB.

In terms of biological role, one of the primary rRNA binding proteins, it binds directly near the 3'-end of the 23S rRNA, where it nucleates assembly of the 50S subunit. This is Large ribosomal subunit protein uL3 from Rhodopseudomonas palustris (strain ATCC BAA-98 / CGA009).